The sequence spans 207 residues: Ribosome maturation factor RimP (207 aa).

This sequence belongs to the RimP family.

It is found in the cytoplasm. In terms of biological role, required for maturation of 30S ribosomal subunits. This is Ribosome maturation factor RimP from Parvibaculum lavamentivorans (strain DS-1 / DSM 13023 / NCIMB 13966).